Reading from the N-terminus, the 500-residue chain is Probable trehalose-phosphate phosphatase 8 (500 aa).

Belongs to the trehalose phosphatase family. Requires a divalent metal cation as cofactor.

The catalysed reaction is alpha,alpha-trehalose 6-phosphate + H2O = alpha,alpha-trehalose + phosphate. The protein operates within glycan biosynthesis; trehalose biosynthesis. Functionally, removes the phosphate from trehalose 6-phosphate to produce free trehalose. Trehalose accumulation in plant may improve abiotic stress tolerance. This is Probable trehalose-phosphate phosphatase 8 (TPP8) from Oryza sativa subsp. japonica (Rice).